A 141-amino-acid polypeptide reads, in one-letter code: Nucleoside diphosphate kinase (141 aa).

Residues lysine 10, phenylalanine 58, arginine 86, threonine 92, arginine 103, and asparagine 113 each contribute to the ATP site. Residue histidine 116 is the Pros-phosphohistidine intermediate of the active site.

The protein belongs to the NDK family. As to quaternary structure, homotetramer. Mg(2+) is required as a cofactor.

The protein localises to the cytoplasm. It catalyses the reaction a 2'-deoxyribonucleoside 5'-diphosphate + ATP = a 2'-deoxyribonucleoside 5'-triphosphate + ADP. It carries out the reaction a ribonucleoside 5'-diphosphate + ATP = a ribonucleoside 5'-triphosphate + ADP. In terms of biological role, major role in the synthesis of nucleoside triphosphates other than ATP. The ATP gamma phosphate is transferred to the NDP beta phosphate via a ping-pong mechanism, using a phosphorylated active-site intermediate. In Ehrlichia canis (strain Jake), this protein is Nucleoside diphosphate kinase.